A 270-amino-acid polypeptide reads, in one-letter code: Bis(5'-nucleosyl)-tetraphosphatase, symmetrical (270 aa).

Belongs to the Ap4A hydrolase family.

The enzyme catalyses P(1),P(4)-bis(5'-adenosyl) tetraphosphate + H2O = 2 ADP + 2 H(+). Hydrolyzes diadenosine 5',5'''-P1,P4-tetraphosphate to yield ADP. The sequence is that of Bis(5'-nucleosyl)-tetraphosphatase, symmetrical from Actinobacillus pleuropneumoniae serotype 3 (strain JL03).